Reading from the N-terminus, the 214-residue chain is Octanoyltransferase (214 aa).

A BPL/LPL catalytic domain is found at 34-214 (GVQKELVWLL…KFNEIFSNFN (181 aa)). Residues 73–80 (RGGKYTYH), 145–147 (AFG), and 158–160 (GVS) contribute to the substrate site. C176 functions as the Acyl-thioester intermediate in the catalytic mechanism.

It belongs to the LipB family.

The protein resides in the cytoplasm. It catalyses the reaction octanoyl-[ACP] + L-lysyl-[protein] = N(6)-octanoyl-L-lysyl-[protein] + holo-[ACP] + H(+). Its pathway is protein modification; protein lipoylation via endogenous pathway; protein N(6)-(lipoyl)lysine from octanoyl-[acyl-carrier-protein]: step 1/2. In terms of biological role, catalyzes the transfer of endogenously produced octanoic acid from octanoyl-acyl-carrier-protein onto the lipoyl domains of lipoate-dependent enzymes. Lipoyl-ACP can also act as a substrate although octanoyl-ACP is likely to be the physiological substrate. This is Octanoyltransferase from Ehrlichia chaffeensis (strain ATCC CRL-10679 / Arkansas).